Reading from the N-terminus, the 77-residue chain is Spermatid-specific protein T2 (77 aa).

The tract at residues 1 to 21 (MKVAANTSKMLVEKLDLLKGG) is hydrophobic. The disordered stretch occupies residues 1 to 77 (MKVAANTSKM…YSRRRYRRRR (77 aa)). Residues 20-77 (GGRRRRRRSRRRRRSRRRRSRSPYRRRYRRRRRRRRSRRRRRYRRRRSYSRRRYRRRR) are compositionally biased toward basic residues.

Phosphorylation occurs at different degrees. The triphosphorylated form may be predominant in T2. SP2 appears to be phosphorylated in elongated spermatids, but dephosphorylated in mature sperm cells. In terms of tissue distribution, testis.

It localises to the nucleus. Its subcellular location is the chromosome. Functionally, cuttlefish spermiogenesis is characterized by a double nuclear protein transition: histones -&gt; spermatid-specific proteins (T1/T2) -&gt; protamines (SP1/SP2). The protamines compact sperm DNA into a highly condensed, stable and inactive complex. In Sepia officinalis (Common cuttlefish), this protein is Spermatid-specific protein T2.